A 102-amino-acid polypeptide reads, in one-letter code: Small ribosomal subunit protein uS10 (102 aa).

The protein belongs to the universal ribosomal protein uS10 family. In terms of assembly, part of the 30S ribosomal subunit.

Functionally, involved in the binding of tRNA to the ribosomes. This Leuconostoc citreum (strain KM20) protein is Small ribosomal subunit protein uS10.